Consider the following 128-residue polypeptide: Small ribosomal subunit protein uS9c (128 aa).

It belongs to the universal ribosomal protein uS9 family.

It is found in the plastid. This is Small ribosomal subunit protein uS9c (rps9) from Euglena longa (Euglenophycean alga).